The sequence spans 175 residues: ATP synthase subunit d, mitochondrial (175 aa).

An N-acetylserine modification is found at serine 2.

It belongs to the ATPase d subunit family.

Its subcellular location is the mitochondrion inner membrane. Mitochondrial membrane ATP synthase (F(1)F(0) ATP synthase or Complex V) produces ATP from ADP in the presence of a proton gradient across the membrane which is generated by electron transport complexes of the respiratory chain. F-type ATPases consist of two structural domains, F(1) - containing the extramembraneous catalytic core, and F(0) - containing the membrane proton channel, linked together by a central stalk and a peripheral stalk. During catalysis, ATP synthesis in the catalytic domain of F(1) is coupled via a rotary mechanism of the central stalk subunits to proton translocation. Part of the complex F(0) domain and the peripheric stalk, which acts as a stator to hold the catalytic alpha(3)beta(3) subcomplex and subunit a/ATP6 static relative to the rotary elements. The polypeptide is ATP synthase subunit d, mitochondrial (atp7) (Schizosaccharomyces pombe (strain 972 / ATCC 24843) (Fission yeast)).